Reading from the N-terminus, the 166-residue chain is uncharacterized protein (166 aa).

4Fe-4S ferredoxin-type domains follow at residues Ala-44 to Gln-73, Ala-75 to Pro-104, and Ser-139 to Lys-166. [4Fe-4S] cluster contacts are provided by Cys-53, Cys-56, Cys-59, Cys-63, Cys-84, Cys-87, Cys-90, and Cys-94.

This is an uncharacterized protein from Haemophilus influenzae (strain ATCC 51907 / DSM 11121 / KW20 / Rd).